The sequence spans 266 residues: MPIPTPYEDLLRLVLDRGTAKSDRTGTGTRSLFGQQLRYDLSAGFPLITTKKVHLKSVVYELLWFLRGDSNVDWLHRHGVTIWDEWASDTGDLGPIYGVQWRSWPTPSGEHIDQISAALDLLRTDPDSRRIIVSAWNVGEIPRMALPPCHAFFQFYVADGRLSCQLYQRSADLFLGVPFNIASYALLTHMMAAQAGLSVGEFVWTGGDCHIYDNHVEQVRLQLSREPRPYPELILAHRDSIFDYTYDDVVVHNYDPHPAIKAPVAV.

Arg-24 serves as a coordination point for dUMP. His-54 is a (6R)-5,10-methylene-5,6,7,8-tetrahydrofolate binding site. Position 129–130 (129–130 (RR)) interacts with dUMP. Catalysis depends on Cys-149, which acts as the Nucleophile. DUMP-binding positions include 169-172 (RSAD), Asn-180, and 210-212 (HIY). Residue Asp-172 participates in (6R)-5,10-methylene-5,6,7,8-tetrahydrofolate binding. A (6R)-5,10-methylene-5,6,7,8-tetrahydrofolate-binding site is contributed by Ala-265.

It belongs to the thymidylate synthase family. Bacterial-type ThyA subfamily. As to quaternary structure, homodimer.

Its subcellular location is the cytoplasm. The enzyme catalyses dUMP + (6R)-5,10-methylene-5,6,7,8-tetrahydrofolate = 7,8-dihydrofolate + dTMP. It participates in pyrimidine metabolism; dTTP biosynthesis. Catalyzes the reductive methylation of 2'-deoxyuridine-5'-monophosphate (dUMP) to 2'-deoxythymidine-5'-monophosphate (dTMP) while utilizing 5,10-methylenetetrahydrofolate (mTHF) as the methyl donor and reductant in the reaction, yielding dihydrofolate (DHF) as a by-product. This enzymatic reaction provides an intracellular de novo source of dTMP, an essential precursor for DNA biosynthesis. This chain is Thymidylate synthase, found in Mycolicibacterium paratuberculosis (strain ATCC BAA-968 / K-10) (Mycobacterium paratuberculosis).